We begin with the raw amino-acid sequence, 231 residues long: Putative N-acetylmannosamine-6-phosphate 2-epimerase (231 aa).

Belongs to the NanE family.

The catalysed reaction is an N-acyl-D-glucosamine 6-phosphate = an N-acyl-D-mannosamine 6-phosphate. The protein operates within amino-sugar metabolism; N-acetylneuraminate degradation; D-fructose 6-phosphate from N-acetylneuraminate: step 3/5. Converts N-acetylmannosamine-6-phosphate (ManNAc-6-P) to N-acetylglucosamine-6-phosphate (GlcNAc-6-P). This Latilactobacillus sakei subsp. sakei (strain 23K) (Lactobacillus sakei subsp. sakei) protein is Putative N-acetylmannosamine-6-phosphate 2-epimerase.